The chain runs to 248 residues: 3-deoxy-manno-octulosonate cytidylyltransferase (248 aa).

Belongs to the KdsB family.

The protein localises to the cytoplasm. The enzyme catalyses 3-deoxy-alpha-D-manno-oct-2-ulosonate + CTP = CMP-3-deoxy-beta-D-manno-octulosonate + diphosphate. Its pathway is nucleotide-sugar biosynthesis; CMP-3-deoxy-D-manno-octulosonate biosynthesis; CMP-3-deoxy-D-manno-octulosonate from 3-deoxy-D-manno-octulosonate and CTP: step 1/1. The protein operates within bacterial outer membrane biogenesis; lipopolysaccharide biosynthesis. In terms of biological role, activates KDO (a required 8-carbon sugar) for incorporation into bacterial lipopolysaccharide in Gram-negative bacteria. The polypeptide is 3-deoxy-manno-octulosonate cytidylyltransferase (Salmonella enteritidis PT4 (strain P125109)).